The following is a 196-amino-acid chain: RNA-binding protein with multiple splicing 2 (196 aa).

In terms of domain architecture, RRM spans 20–97 (RTLFVSGLPI…QTLRLEFAKA (78 aa)). The tract at residues 30–40 (DIKPRELYLLF) is important for homodimerization.

In terms of assembly, homodimer. In terms of tissue distribution, expressed in developing heart, pronephros, retina and epiphysis. In adult, high expression in heart, moderate in kidney, undetectable in liver, lung and skeletal muscle.

Its subcellular location is the cytoplasm. The protein resides in the nucleus. The protein localises to the stress granule. Functionally, RNA-binding protein involved in the regulation of smooth muscle cell differentiation and proliferation in the gastrointestinal system. Binds NOG mRNA, the major inhibitor of the bone morphogenetic protein (BMP) pathway. Mediates an increase of NOG mRNA levels, thereby contributing to the negative regulation of BMP signaling pathway and promoting reversible dedifferentiation and proliferation of smooth muscle cells. Acts as a pre-mRNA alternative splicing regulator. Mediates ACTN1 and FLNB alternative splicing. Likely binds to mRNA tandem CAC trinucleotide or CA dinucleotide motifs. The protein is RNA-binding protein with multiple splicing 2 of Xenopus laevis (African clawed frog).